Reading from the N-terminus, the 418-residue chain is MDKFLITGGVKLEGEVRISGAKNAALPLLAAMILADSPITLNNVPNLKDVNTLVKLIAGLGITMDYEGETVKADTSTLSNQFAPYELVKTMRASILVLGPLLARYGNAQVSLPGGCAIGSRPVDQHLKALEALGAHIEVENGYVHATVDGRLKGADITFDMVTVGGTENILMAAVLAEGTTTIRNAAREPEITDLAQMLIEMGAKIEGLDTDTLVVTGVESLHGCEYSVVADRIETGSYLAAAAITGGRVKTTHTDPSLLESVLDKFEEMGAEVTRGEDWIELDMMGKRPKAVSFRTLPHPEFPTDMQAQLMAVNVIGRGFATISETIFENRFMHVPELSRMGANIQVEGNDAIVTGVEKLQAAPVMATDLRASFSLVLAALVAEGDTLIDRIYHIDRGYENIEAKLQSLGAKIKRVS.

22–23 (KN) contributes to the phosphoenolpyruvate binding site. UDP-N-acetyl-alpha-D-glucosamine is bound at residue Arg-92. Cys-116 functions as the Proton donor in the catalytic mechanism. Cys-116 carries the 2-(S-cysteinyl)pyruvic acid O-phosphothioketal modification. UDP-N-acetyl-alpha-D-glucosamine-binding positions include 121 to 125 (RPVDQ), Asp-306, and Ile-328.

It belongs to the EPSP synthase family. MurA subfamily.

The protein resides in the cytoplasm. The catalysed reaction is phosphoenolpyruvate + UDP-N-acetyl-alpha-D-glucosamine = UDP-N-acetyl-3-O-(1-carboxyvinyl)-alpha-D-glucosamine + phosphate. It functions in the pathway cell wall biogenesis; peptidoglycan biosynthesis. Functionally, cell wall formation. Adds enolpyruvyl to UDP-N-acetylglucosamine. This chain is UDP-N-acetylglucosamine 1-carboxyvinyltransferase, found in Acinetobacter baylyi (strain ATCC 33305 / BD413 / ADP1).